The following is a 312-amino-acid chain: tRNA-cytidine(32) 2-sulfurtransferase (312 aa).

A PP-loop motif motif is present at residues 39–44 (SGGKDS). Residues C114, C117, and C205 each coordinate [4Fe-4S] cluster.

Belongs to the TtcA family. As to quaternary structure, homodimer. Requires Mg(2+) as cofactor. [4Fe-4S] cluster is required as a cofactor.

It is found in the cytoplasm. The enzyme catalyses cytidine(32) in tRNA + S-sulfanyl-L-cysteinyl-[cysteine desulfurase] + AH2 + ATP = 2-thiocytidine(32) in tRNA + L-cysteinyl-[cysteine desulfurase] + A + AMP + diphosphate + H(+). It participates in tRNA modification. Catalyzes the ATP-dependent 2-thiolation of cytidine in position 32 of tRNA, to form 2-thiocytidine (s(2)C32). The sulfur atoms are provided by the cysteine/cysteine desulfurase (IscS) system. This Cupriavidus pinatubonensis (strain JMP 134 / LMG 1197) (Cupriavidus necator (strain JMP 134)) protein is tRNA-cytidine(32) 2-sulfurtransferase.